Consider the following 509-residue polypeptide: Maturase K (509 aa).

The protein belongs to the intron maturase 2 family. MatK subfamily.

It localises to the plastid. It is found in the chloroplast. Its function is as follows. Usually encoded in the trnK tRNA gene intron. Probably assists in splicing its own and other chloroplast group II introns. The polypeptide is Maturase K (Ibicella lutea (Yellow unicorn-plant)).